A 312-amino-acid chain; its full sequence is Acetyl-coenzyme A carboxylase carboxyl transferase subunit alpha (312 aa).

One can recognise a CoA carboxyltransferase C-terminal domain in the interval 36 to 286 (NLEKEISKTY…ADYVKKSLNE (251 aa)).

It belongs to the AccA family. As to quaternary structure, acetyl-CoA carboxylase is a heterohexamer composed of biotin carboxyl carrier protein (AccB), biotin carboxylase (AccC) and two subunits each of ACCase subunit alpha (AccA) and ACCase subunit beta (AccD).

It is found in the cytoplasm. The catalysed reaction is N(6)-carboxybiotinyl-L-lysyl-[protein] + acetyl-CoA = N(6)-biotinyl-L-lysyl-[protein] + malonyl-CoA. It functions in the pathway lipid metabolism; malonyl-CoA biosynthesis; malonyl-CoA from acetyl-CoA: step 1/1. Its function is as follows. Component of the acetyl coenzyme A carboxylase (ACC) complex. First, biotin carboxylase catalyzes the carboxylation of biotin on its carrier protein (BCCP) and then the CO(2) group is transferred by the carboxyltransferase to acetyl-CoA to form malonyl-CoA. This is Acetyl-coenzyme A carboxylase carboxyl transferase subunit alpha from Campylobacter jejuni subsp. jejuni serotype O:6 (strain 81116 / NCTC 11828).